The primary structure comprises 206 residues: Type III pantothenate kinase (206 aa).

5-12 (DIGNSTAK) is a binding site for ATP. Residues Tyr67 and 72–75 (GVDR) contribute to the substrate site. Asp74 serves as the catalytic Proton acceptor. Position 89 (Asp89) interacts with K(+). Ser92 is a binding site for ATP. Thr144 is a substrate binding site.

It belongs to the type III pantothenate kinase family. As to quaternary structure, homodimer. It depends on NH4(+) as a cofactor. K(+) serves as cofactor.

The protein resides in the cytoplasm. It catalyses the reaction (R)-pantothenate + ATP = (R)-4'-phosphopantothenate + ADP + H(+). It participates in cofactor biosynthesis; coenzyme A biosynthesis; CoA from (R)-pantothenate: step 1/5. In terms of biological role, catalyzes the phosphorylation of pantothenate (Pan), the first step in CoA biosynthesis. The chain is Type III pantothenate kinase from Campylobacter hominis (strain ATCC BAA-381 / DSM 21671 / CCUG 45161 / LMG 19568 / NCTC 13146 / CH001A).